We begin with the raw amino-acid sequence, 152 residues long: Early glycoprotein GP48 (152 aa).

A signal peptide spans 1-25 (MVMMLRTWRLLPMVLLAAYCYCVFG). N48, N53, N61, N69, N108, N112, N122, N139, and N148 each carry an N-linked (GlcNAc...) asparagine; by host glycan.

The protein belongs to the RL11 family. In terms of processing, N-glycosylated and possibly O-glycosylated.

The protein localises to the virion membrane. The sequence is that of Early glycoprotein GP48 (UL4) from Homo sapiens (Human).